A 134-amino-acid polypeptide reads, in one-letter code: Replication enhancer protein (134 aa).

It belongs to the geminiviridae replication enhancer protein family. In terms of assembly, homooligomer. Interacts with the replication-associated protein (REP). Interacts with host proliferating cell nuclear antigen (PCNA). Interacts with host retinoblastoma-related protein 1 (RBR1), and may thereby deregulate the host cell cycle. Oligomerization and interaction with PCNA are necessary for optimal replication enhancement.

Increases viral DNA accumulation. Enhances infectivity and symptom expression. The chain is Replication enhancer protein from Squash leaf curl virus (SLCV).